The chain runs to 244 residues: ATP-dependent dethiobiotin synthetase BioD 1 (244 aa).

12–17 (NVGKTV) contacts ATP. Residue Thr-16 coordinates Mg(2+). Lys-37 is an active-site residue. Asp-68 contacts ATP. Positions 68 and 126 each coordinate Mg(2+). ATP-binding positions include 186–187 (NR), 215–217 (PYL), and Glu-222.

It belongs to the dethiobiotin synthetase family. As to quaternary structure, homodimer. Requires Mg(2+) as cofactor.

The protein resides in the cytoplasm. It carries out the reaction (7R,8S)-7,8-diammoniononanoate + CO2 + ATP = (4R,5S)-dethiobiotin + ADP + phosphate + 3 H(+). The protein operates within cofactor biosynthesis; biotin biosynthesis; biotin from 7,8-diaminononanoate: step 1/2. In terms of biological role, catalyzes a mechanistically unusual reaction, the ATP-dependent insertion of CO2 between the N7 and N8 nitrogen atoms of 7,8-diaminopelargonic acid (DAPA, also called 7,8-diammoniononanoate) to form a ureido ring. The protein is ATP-dependent dethiobiotin synthetase BioD 1 of Pasteurella multocida (strain Pm70).